Consider the following 69-residue polypeptide: Ubiquitin-ribosomal protein eL40 fusion protein (69 aa).

The region spanning 1-17 is the Ubiquitin-like domain; it reads NIQKESTLHLVLRLRGG. A Glycyl lysine isopeptide (Lys-Gly) (interchain with G-Cter in ubiquitin) cross-link involves residue lysine 4. Glycine 17 is covalently cross-linked (Glycyl lysine isopeptide (Gly-Lys) (interchain with K-? in acceptor proteins)). Lysine 39 carries the post-translational modification N6,N6,N6-trimethyllysine.

The protein in the N-terminal section; belongs to the ubiquitin family. In the C-terminal section; belongs to the eukaryotic ribosomal protein eL40 family. Part of the 60S ribosomal subunit. Trimethylation of Lys-39 ('Lys-22' of the mature chain) by SMYD5 promotes translation elongation and protein synthesis.

The protein localises to the cytoplasm. It is found in the nucleus. Functionally, exists either covalently attached to another protein, or free (unanchored). When covalently bound, it is conjugated to target proteins via an isopeptide bond either as a monomer (monoubiquitin), a polymer linked via different Lys residues of the ubiquitin (polyubiquitin chains) or a linear polymer linked via the initiator Met of the ubiquitin (linear polyubiquitin chains). Polyubiquitin chains, when attached to a target protein, have different functions depending on the Lys residue of the ubiquitin that is linked: Lys-6-linked may be involved in DNA repair; Lys-11-linked is involved in ERAD (endoplasmic reticulum-associated degradation) and in cell-cycle regulation; Lys-29-linked is involved in proteotoxic stress response and cell cycle; Lys-33-linked is involved in kinase modification; Lys-48-linked is involved in protein degradation via the proteasome; Lys-63-linked is involved in endocytosis, DNA-damage responses as well as in signaling processes leading to activation of the transcription factor NF-kappa-B. Linear polymer chains formed via attachment by the initiator Met lead to cell signaling. Ubiquitin is usually conjugated to Lys residues of target proteins, however, in rare cases, conjugation to Cys or Ser residues has been observed. When polyubiquitin is free (unanchored-polyubiquitin), it also has distinct roles, such as in activation of protein kinases, and in signaling. Component of the 60S subunit of the ribosome. In Gallus gallus (Chicken), this protein is Ubiquitin-ribosomal protein eL40 fusion protein (UBA52).